The following is a 193-amino-acid chain: GTP cyclohydrolase 1 (193 aa).

The Zn(2+) site is built by Cys73, His76, and Cys144.

This sequence belongs to the GTP cyclohydrolase I family. In terms of assembly, homomer.

It carries out the reaction GTP + H2O = 7,8-dihydroneopterin 3'-triphosphate + formate + H(+). It participates in cofactor biosynthesis; 7,8-dihydroneopterin triphosphate biosynthesis; 7,8-dihydroneopterin triphosphate from GTP: step 1/1. This chain is GTP cyclohydrolase 1, found in Hyperthermus butylicus (strain DSM 5456 / JCM 9403 / PLM1-5).